A 391-amino-acid chain; its full sequence is Ferrochelatase (391 aa).

Residues H196 and E281 each contribute to the Fe cation site.

The protein belongs to the ferrochelatase family.

It is found in the cytoplasm. The enzyme catalyses heme b + 2 H(+) = protoporphyrin IX + Fe(2+). Its pathway is porphyrin-containing compound metabolism; protoheme biosynthesis; protoheme from protoporphyrin-IX: step 1/1. In terms of biological role, catalyzes the ferrous insertion into protoporphyrin IX. This is Ferrochelatase from Synechococcus sp. (strain CC9605).